A 277-amino-acid polypeptide reads, in one-letter code: Thiazole synthase (277 aa).

K107 acts as the Schiff-base intermediate with DXP in catalysis. 1-deoxy-D-xylulose 5-phosphate-binding positions include G168, 194 to 195, and 216 to 217; these read AG and AS.

The protein belongs to the ThiG family. As to quaternary structure, homotetramer. Forms heterodimers with either ThiH or ThiS.

The protein resides in the cytoplasm. The catalysed reaction is [ThiS sulfur-carrier protein]-C-terminal-Gly-aminoethanethioate + 2-iminoacetate + 1-deoxy-D-xylulose 5-phosphate = [ThiS sulfur-carrier protein]-C-terminal Gly-Gly + 2-[(2R,5Z)-2-carboxy-4-methylthiazol-5(2H)-ylidene]ethyl phosphate + 2 H2O + H(+). Its pathway is cofactor biosynthesis; thiamine diphosphate biosynthesis. Its function is as follows. Catalyzes the rearrangement of 1-deoxy-D-xylulose 5-phosphate (DXP) to produce the thiazole phosphate moiety of thiamine. Sulfur is provided by the thiocarboxylate moiety of the carrier protein ThiS. In vitro, sulfur can be provided by H(2)S. The polypeptide is Thiazole synthase (Cutibacterium acnes (strain DSM 16379 / KPA171202) (Propionibacterium acnes)).